A 415-amino-acid chain; its full sequence is Levansucrase (415 aa).

Positions 45, 46, 132, 202, and 203 each coordinate sucrose. Residue D46 is the Nucleophile of the active site. The active-site Proton donor/acceptor is E287.

This sequence belongs to the glycosyl hydrolase 68 family.

It is found in the secreted. The enzyme catalyses [6)-beta-D-fructofuranosyl-(2-&gt;](n) alpha-D-glucopyranoside + sucrose = [6)-beta-D-fructofuranosyl-(2-&gt;](n+1) alpha-D-glucopyranoside + D-glucose. In terms of biological role, catalyzes the synthesis of levan, a fructose polymer, by transferring the fructosyl moiety from sucrose to a growing acceptor molecule. This chain is Levansucrase, found in Erwinia amylovora (Fire blight bacteria).